A 285-amino-acid chain; its full sequence is MDINEIKDIKTKELVQKYNFRFSKSLGQNFLIDDSVPRDIVNGADVCEDDLVIEIGPGVGTLTVQLLKRAKRVVAIELDSSLIPILTAELGDNPKFQLIHNDALKVDFNEIIGDEKSVKLVANLPYYVTTPIIVNLLKGGYNFKSLTIMIQKEVAERMNAEPNCKDYGALSILVQYYCNTKIVRKVPPSCFIPRPKVDSIVIRLERLEEPSVKVKNEKLFFEIVRHAFNMRRKTLWNATKNVKLPKELMEKAYEEAGIDPKRRGETLSLAEFGALSDAIDKYMNN.

6 residues coordinate S-adenosyl-L-methionine: Asn-29, Leu-31, Gly-56, Glu-77, Asp-102, and Asn-123.

Belongs to the class I-like SAM-binding methyltransferase superfamily. rRNA adenine N(6)-methyltransferase family. RsmA subfamily.

The protein localises to the cytoplasm. It carries out the reaction adenosine(1518)/adenosine(1519) in 16S rRNA + 4 S-adenosyl-L-methionine = N(6)-dimethyladenosine(1518)/N(6)-dimethyladenosine(1519) in 16S rRNA + 4 S-adenosyl-L-homocysteine + 4 H(+). Its function is as follows. Specifically dimethylates two adjacent adenosines (A1518 and A1519) in the loop of a conserved hairpin near the 3'-end of 16S rRNA in the 30S particle. May play a critical role in biogenesis of 30S subunits. The polypeptide is Ribosomal RNA small subunit methyltransferase A (Clostridium perfringens (strain ATCC 13124 / DSM 756 / JCM 1290 / NCIMB 6125 / NCTC 8237 / Type A)).